Here is a 394-residue protein sequence, read N- to C-terminus: MAKAKFERIKPHVNVGTIGHVDHGKTTLTAAISAVLSKTYGGEVKNFAQIDNAPEERERGITINTSHIEYDTPIRHYAHVDCPGHADYVKNMITGAAQMDGAILVVAATDGPMPQTREHILLSRQVGVPFIIVFMNKCDMVDDEELLELVEMEVRELLSEYDFPGDDLPVIQGSALKALEGQPEWEAKILELAEALDTYIPEPARDIDKPFLLPIEDVFSISGRGTVVTGRVERGIVRVSDEVEIVGVRPTTKTTCTGVEMFRKLLDEGRAGENCGVLLRGTKRDDVERGQVLAKPGSINPHTTFESEVYVLSKEEGGRHTPFFKGYRPQFFFRTTDVTGTIELPEGVEMVMPGDNIKMVVTLIYPIAMDDGLRFAIREGGRTVGAGVVAKIIA.

The region spanning 10-204 (KPHVNVGTIG…ALDTYIPEPA (195 aa)) is the tr-type G domain. The segment at 19-26 (GHVDHGKT) is G1. 19–26 (GHVDHGKT) serves as a coordination point for GTP. Thr26 provides a ligand contact to Mg(2+). The interval 60 to 64 (GITIN) is G2. The G3 stretch occupies residues 81–84 (DCPG). Residues 81-85 (DCPGH) and 136-139 (NKCD) contribute to the GTP site. Residues 136-139 (NKCD) form a G4 region. A G5 region spans residues 174 to 176 (SAL).

It belongs to the TRAFAC class translation factor GTPase superfamily. Classic translation factor GTPase family. EF-Tu/EF-1A subfamily. As to quaternary structure, monomer.

Its subcellular location is the cytoplasm. The catalysed reaction is GTP + H2O = GDP + phosphate + H(+). Its function is as follows. GTP hydrolase that promotes the GTP-dependent binding of aminoacyl-tRNA to the A-site of ribosomes during protein biosynthesis. This chain is Elongation factor Tu 2, found in Shewanella frigidimarina (strain NCIMB 400).